The primary structure comprises 291 residues: MTKAELVKELRTRTQASMSECIKALDASENDIEKAIIWLRENGAIKAANKLKNAATDGVTLAKKVGNKAILIEVNCQTDFVAKNENFLAYANQILEEALAKVESKEDFDKLIINGKPIAESGLDLTAYIGEKIVFRRGEILKANDQQTLGVYTHNNNRVAAIILVDGKVEDEVVRNVAMHAAAMRPRYLNEQVVDQVWLAKEREIIVNQLEHEGKPAAFAAKIIEGRLNKILKENCLVDQSYFKQPELTIEKYLKNNNAVAVGYYSYEVGEGIEKAPQMSFADEVAAQMKK.

Residues 78–81 form an involved in Mg(2+) ion dislocation from EF-Tu region; the sequence is TDFV.

It belongs to the EF-Ts family.

It localises to the cytoplasm. Functionally, associates with the EF-Tu.GDP complex and induces the exchange of GDP to GTP. It remains bound to the aminoacyl-tRNA.EF-Tu.GTP complex up to the GTP hydrolysis stage on the ribosome. The sequence is that of Elongation factor Ts from Ureaplasma urealyticum serovar 10 (strain ATCC 33699 / Western).